Here is a 447-residue protein sequence, read N- to C-terminus: Delta(5) fatty acid desaturase fat-4 (447 aa).

The Cytochrome b5 heme-binding domain occupies 1–80 (MVLREQEHEP…TQEPEIPDIK (80 aa)). Transmembrane regions (helical) follow at residues 137-157 (IFTI…PSAI), 257-277 (WTFM…IFVS), 292-312 (IYEQ…LYFL), and 319-339 (IMFF…VVTF).

It belongs to the fatty acid desaturase type 1 family.

The protein resides in the membrane. It catalyses the reaction (11Z,14Z)-eicosadienoyl-CoA + 2 Fe(II)-[cytochrome b5] + O2 + 2 H(+) = (5Z,11Z,14Z)-eicosatrienoyl-CoA + 2 Fe(III)-[cytochrome b5] + 2 H2O. The catalysed reaction is (11Z,14Z,17Z)-eicosatrienoyl-CoA + 2 Fe(II)-[cytochrome b5] + O2 + 2 H(+) = (5Z,11Z,14Z,17Z)-eicosatetraenoyl-CoA + 2 Fe(III)-[cytochrome b5] + 2 H2O. It carries out the reaction (8Z,11Z,14Z,17Z)-eicosatetraenoyl-CoA + 2 Fe(II)-[cytochrome b5] + O2 + 2 H(+) = (5Z,8Z,11Z,14Z,17Z)-eicosapentaenoyl-CoA + 2 Fe(III)-[cytochrome b5] + 2 H2O. The enzyme catalyses (8Z,11Z,14Z)-eicosatrienoyl-CoA + 2 Fe(II)-[cytochrome b5] + O2 + 2 H(+) = (5Z,8Z,11Z,14Z)-eicosatetraenoyl-CoA + 2 Fe(III)-[cytochrome b5] + 2 H2O. The protein operates within lipid metabolism; polyunsaturated fatty acid biosynthesis. In terms of biological role, can function as a Delta(5) fatty acid desaturase and behaves as a (8-3) desaturase. Introduces a double bond in the fatty acid chain 5 carbons away from carboxy terminal to biosynthesize polyunsaturated fatty acids (PUFAs) endogenously (PUFAs are essential for membrane structure and many cellular and physiological processes). Acts on a variety of substrates such as dihomo-gamma-linoleoyl-CoA ((8Z,11Z,14Z)-eicosatrienoyl-CoA, 20:3n-6) to generate arachidonoyl-CoA ((5Z,8Z,11Z,14Z)-eicosatetraenoyl-CoA, 20:4n-6). Also acts on a number of other substrates, including fatty acids that do not contain a double bond at the 8 position like (11Z,14Z,17Z)-eicosatrienoyl-CoA (20:3n-3) to produce (5Z,11Z,14Z,17Z)-eicosatetraenoyl-CoA (20:4n-3). Unlike plants, Caenorhabditis elegans desaturases seem to use fatty acyl-CoAs as substrates. This chain is Delta(5) fatty acid desaturase fat-4 (fat-4), found in Caenorhabditis elegans.